A 513-amino-acid polypeptide reads, in one-letter code: Bifunctional purine biosynthesis protein PurH (513 aa).

The region spanning 1-145 is the MGS-like domain; sequence MTKRALISVS…KNYQDVTAVV (145 aa).

The protein belongs to the PurH family.

It carries out the reaction (6R)-10-formyltetrahydrofolate + 5-amino-1-(5-phospho-beta-D-ribosyl)imidazole-4-carboxamide = 5-formamido-1-(5-phospho-D-ribosyl)imidazole-4-carboxamide + (6S)-5,6,7,8-tetrahydrofolate. The catalysed reaction is IMP + H2O = 5-formamido-1-(5-phospho-D-ribosyl)imidazole-4-carboxamide. Its pathway is purine metabolism; IMP biosynthesis via de novo pathway; 5-formamido-1-(5-phospho-D-ribosyl)imidazole-4-carboxamide from 5-amino-1-(5-phospho-D-ribosyl)imidazole-4-carboxamide (10-formyl THF route): step 1/1. The protein operates within purine metabolism; IMP biosynthesis via de novo pathway; IMP from 5-formamido-1-(5-phospho-D-ribosyl)imidazole-4-carboxamide: step 1/1. This is Bifunctional purine biosynthesis protein PurH from Enterococcus faecalis (strain ATCC 700802 / V583).